A 74-amino-acid polypeptide reads, in one-letter code: UPF0154 protein LVIS_1358 (74 aa).

The helical transmembrane segment at W4–G24 threads the bilayer.

Belongs to the UPF0154 family.

The protein resides in the cell membrane. The polypeptide is UPF0154 protein LVIS_1358 (Levilactobacillus brevis (strain ATCC 367 / BCRC 12310 / CIP 105137 / JCM 1170 / LMG 11437 / NCIMB 947 / NCTC 947) (Lactobacillus brevis)).